Reading from the N-terminus, the 441-residue chain is Mannose-6-phosphate isomerase (441 aa).

Zn(2+) contacts are provided by Gln-111, His-113, Glu-138, and His-285. Arg-304 is an active-site residue.

This sequence belongs to the mannose-6-phosphate isomerase type 1 family. As to quaternary structure, monomer. Requires Zn(2+) as cofactor.

Its subcellular location is the cytoplasm. The enzyme catalyses D-mannose 6-phosphate = D-fructose 6-phosphate. It functions in the pathway nucleotide-sugar biosynthesis; GDP-alpha-D-mannose biosynthesis; alpha-D-mannose 1-phosphate from D-fructose 6-phosphate: step 1/2. Involved in the synthesis of the GDP-mannose and dolichol-phosphate-mannose required for a number of critical mannosyl transfer reactions. In Candida albicans (strain SC5314 / ATCC MYA-2876) (Yeast), this protein is Mannose-6-phosphate isomerase (PMI1).